Reading from the N-terminus, the 307-residue chain is 17-beta-hydroxysteroid dehydrogenase type 3 (307 aa).

The helical transmembrane segment at 6 to 26 threads the bilayer; it reads IIFVLTGTCAILVFGGKIASL. Residue 47-76 coordinates NADP(+); the sequence is GKWAVITGGSDGIGRAYAEELSKQGMSVII. Position 187 (S187) interacts with substrate. Residue Y200 is the Proton acceptor of the active site.

It belongs to the short-chain dehydrogenases/reductases (SDR) family. In terms of tissue distribution, expression shows strong sexual dimorphism. In female, highly expressed in ovaries, and at lower levels in skin muscle, eyes and liver. In males, strongly expressed in liver and at lower levels in testis, spleen, kidney, intestine and muscle.

It localises to the endoplasmic reticulum. The protein localises to the membrane. It catalyses the reaction a 17beta-hydroxy steroid + NADP(+) = a 17-oxo steroid + NADPH + H(+). The catalysed reaction is testosterone + NADP(+) = androst-4-ene-3,17-dione + NADPH + H(+). The enzyme catalyses 3beta-hydroxyandrost-5-en-17-one + NADPH + H(+) = androst-5-en-3beta,17beta-diol + NADP(+). It carries out the reaction 3beta-hydroxy-5alpha-androstan-17-one + NADPH + H(+) = 5alpha-androstane-3beta,17beta-diol + NADP(+). It catalyses the reaction androst-4-ene-3,11,17-trione + NADPH + H(+) = 17beta-hydroxyandrost-4-ene-3,11-dione + NADP(+). The catalysed reaction is 11beta-hydroxyandrost-4-ene-3,17-dione + NADPH + H(+) = 11beta,17beta-dihydroxyandrost-4-ene-3-one + NADP(+). Its pathway is hormone biosynthesis; testosterone biosynthesis. It functions in the pathway steroid metabolism. In terms of biological role, catalyzes the conversion of 17-oxosteroids to 17beta-hydroxysteroids in the presence of NADPH. Favors the reduction of androstenedione to testosterone. Testosterone is the key androgen driving male development and function. Among further tested androgens epiandrosterone and dehydroepiandrosterone are accepted as substrates and reduced at C-17. Can also reduce 11-ketoandrostenedione as well as 11beta-hydroxyandrostenedione at C-17 to the respective testosterone forms. Cannot use androsterone and androstanedione as substrates. The protein is 17-beta-hydroxysteroid dehydrogenase type 3 (hsd17b3) of Danio rerio (Zebrafish).